The chain runs to 362 residues: Serine/threonine-protein kinase-like protein At3g51990 (362 aa).

The signal sequence occupies residues 1-24 (MGYLSCKAGSAVAIAVSSAASTSG). The span at 21 to 32 (STSGSTSSKASA) shows a compositional bias: low complexity. Residues 21-43 (STSGSTSSKASAPPESPIEDRPR) form a disordered region. The region spanning 59-329 (FDINNLLGRG…PGMEEVVGWL (271 aa)) is the Protein kinase domain. ATP is bound by residues 65–73 (LGRGSHGSV) and Lys-86. An N-linked (GlcNAc...) asparagine glycan is attached at Asn-136. Asp-185 (proton acceptor) is an active-site residue. The residue at position 219 (Ser-219) is a Phosphoserine. Phosphothreonine occurs at positions 220 and 225. Phosphotyrosine is present on Tyr-233.

This sequence belongs to the protein kinase superfamily. Ser/Thr protein kinase family.

It localises to the secreted. The enzyme catalyses L-seryl-[protein] + ATP = O-phospho-L-seryl-[protein] + ADP + H(+). It catalyses the reaction L-threonyl-[protein] + ATP = O-phospho-L-threonyl-[protein] + ADP + H(+). The polypeptide is Serine/threonine-protein kinase-like protein At3g51990 (Arabidopsis thaliana (Mouse-ear cress)).